Consider the following 51-residue polypeptide: Protein YrhD (51 aa).

The chain is Protein YrhD (yrhD) from Escherichia coli (strain K12).